Consider the following 224-residue polypeptide: Ribosomal RNA small subunit methyltransferase G (224 aa).

S-adenosyl-L-methionine-binding positions include G69, L74, 119–120 (AE), and R137.

It belongs to the methyltransferase superfamily. RNA methyltransferase RsmG family.

Its subcellular location is the cytoplasm. In terms of biological role, specifically methylates the N7 position of guanine in position 518 of 16S rRNA. This is Ribosomal RNA small subunit methyltransferase G from Mycobacterium bovis (strain ATCC BAA-935 / AF2122/97).